The chain runs to 198 residues: DnaJ homolog subfamily C member 5 (198 aa).

Phosphoserine is present on residues Ser-8, Ser-10, Ser-12, and Ser-15. Residues 13-82 (GESLYHVLGL…RNIYDKYGSL (70 aa)) form the J domain. Tyr-17 is modified (phosphotyrosine). Lys-56 carries the post-translational modification N6-acetyllysine. Phosphoserine is present on Ser-151.

Oligomers. Homodimer. Interacts with the chaperone complex consisting of HSC70 and SGTA. Interacts with ZDHHC13 (via ANK repeats). Interacts with ZDHHC17 (via ANK repeats). Interacts with SYT1, SYT5 and SYT7, and with SYT9, forming a complex with SNAP25. Post-translationally, ser-10 phosphorylation induces an order-to-disorder transition triggering the interaction with Lys-58. This conformational switch modulates DNAJC5's cellular functions by reducing binding to syntaxin and synaptogamin without altering HSC70 interactions. Palmitoylated. Could be palmitoylated by DHHC3, DHHC7, DHHC15 and DHHC17. Palmitoylation occurs probably in the cysteine-rich domain and regulates DNAJC5 membrane attachment. Expressed in pancreas, kidney, skeletal muscle, liver, lung, placenta, brain and heart.

The protein resides in the cytoplasm. It is found in the cytosol. The protein localises to the membrane. Its subcellular location is the cytoplasmic vesicle. It localises to the secretory vesicle. The protein resides in the chromaffin granule membrane. It is found in the melanosome. The protein localises to the cell membrane. Acts as a general chaperone in regulated exocytosis. Acts as a co-chaperone for the SNARE protein SNAP-25. Involved in the calcium-mediated control of a late stage of exocytosis. May have an important role in presynaptic function. May be involved in calcium-dependent neurotransmitter release at nerve endings. In Homo sapiens (Human), this protein is DnaJ homolog subfamily C member 5.